The primary structure comprises 122 residues: Small ribosomal subunit protein uS13 (122 aa).

The disordered stretch occupies residues 96–122; the sequence is PVRGQRTRTNARTRKGPKKTVGVRRAK.

Belongs to the universal ribosomal protein uS13 family. Part of the 30S ribosomal subunit. Forms a loose heterodimer with protein S19. Forms two bridges to the 50S subunit in the 70S ribosome.

Located at the top of the head of the 30S subunit, it contacts several helices of the 16S rRNA. In the 70S ribosome it contacts the 23S rRNA (bridge B1a) and protein L5 of the 50S subunit (bridge B1b), connecting the 2 subunits; these bridges are implicated in subunit movement. Contacts the tRNAs in the A and P-sites. The chain is Small ribosomal subunit protein uS13 from Halothermothrix orenii (strain H 168 / OCM 544 / DSM 9562).